Reading from the N-terminus, the 454-residue chain is MDYAFIVFLVCFVSGTLGNRRRAKRDVDEVTSGINQLVNQLNNVQQDTAAIKSALEELKTEVSASPSTVSQVSEVVNTVGSSLTKFTSGDAFNIVSGCLDLLSTVASTFGGPYGIAISAVISLVSSILSLFAGDGFDSATRKVIEEAFKTHRDQELRDSVNGARRTFNDVIAFLKGASKHGNVTEQELEVISKGVPLTKLSDTLGILESRINRGSTSTDAAEAERTVEFIFLYLQLATMRDTLITNFILILKQVPAADTYANAVSISLDANKESVRETIDFLHNMEAKNAVCGAYYYPIYHSEMTKSILSFAKFFGLPDPPRNTFGGVYRVQNRYWPTWYICKESYMGNHMFRGCSNVRSPSVQIRALENGYQKINLRGKNMYITKHAQGWAWGTADNDPGEQGYFVFVPLKSGYYMISTKKWPNYFVYMESSASGYIRSWNHNPGLQGHWRIL.

Positions 1 to 18 (MDYAFIVFLVCFVSGTLG) are cleaved as a signal peptide. Positions 19 to 25 (NRRRAKR) are excised as a propeptide. Residues 27–61 (VDEVTSGINQLVNQLNNVQQDTAAIKSALEELKTE) adopt a coiled-coil conformation.

This sequence belongs to the jellyfish toxin family. Type II subfamily. Oligomer. Contains 2 disulfide bonds. As to expression, nematocytes.

It localises to the secreted. The protein localises to the nematocyst. Its subcellular location is the target cell membrane. In terms of biological role, the fraction containing this toxin and CfTX-A shows potent hemolytic activity. This fraction causes minor effects on the cardiovascular system of anesthetized rats (at 25 ug/kg), since it has no significant effects on heart rate but produces relatively small increases in mean arterial pressure. The chain is Toxin CfTX-A from Chironex fleckeri (Australian box jellyfish).